Consider the following 1026-residue polypeptide: Contactin-4 (1026 aa).

The first 18 residues, 1-18, serve as a signal peptide directing secretion; the sequence is MRLPWELLVLQSFMLCLA. Ig-like C2-type domains follow at residues 32–117, 122–206, 225–311, 316–400, 406–493, and 497–586; these read PSHV…AKLQ, ENFK…HQVL, PKIE…GQVT, PNWV…AELS, PDFS…GNVV, and PTKV…DKLS. Cystine bridges form between Cys50–Cys100, Cys144–Cys194, Cys247–Cys295, Cys337–Cys384, Cys429–Cys477, and Cys519–Cys576. N-linked (GlcNAc...) asparagine glycans are attached at residues Asn65, Asn90, and Asn191. 3 N-linked (GlcNAc...) asparagine glycosylation sites follow: Asn370, Asn375, and Asn466. 4 Fibronectin type-III domains span residues 599 to 697, 702 to 799, 804 to 899, and 900 to 995; these read PPEA…TEEA, TPAN…SAEE, PPAS…TRKP, and PPSQ…ISNS. Positions 685–710 are disordered; sequence PSRPSEKRRTEEALPEVTPANVSGGG. Over residues 687 to 696 the composition is skewed to basic and acidic residues; it reads RPSEKRRTEE. N-linked (GlcNAc...) asparagine glycans are attached at residues Asn705, Asn764, Asn858, Asn893, Asn911, Asn929, and Asn954. The GPI-anchor amidated serine moiety is linked to residue Ser1000. The propeptide at 1001–1026 is removed in mature form; it reads GASTSNACTLSAISTIMISLTARSSL.

Belongs to the immunoglobulin superfamily. Contactin family. As to quaternary structure, interacts with PTPRG. In terms of tissue distribution, specifically expressed in the nervous system. Not expressed in heart, spleen, lung, liver, kidney or skeletal muscle. In the hippocampus, it is highly expressed in CA1 pyramidal cells and weakly expressed in other regions of the hippocampus.

Its subcellular location is the cell membrane. It is found in the secreted. Functionally, contactins mediate cell surface interactions during nervous system development. Has some neurite outgrowth-promoting activity. May be involved in synaptogenesis. The protein is Contactin-4 (Cntn4) of Rattus norvegicus (Rat).